The following is a 400-amino-acid chain: Subtilisin-like protease 7 (400 aa).

A signal peptide spans 1-20 (MGFITKAIPLALAAASVING). Positions 21–119 (AEIMETRAGV…IERDARVQIN (99 aa)) are excised as a propeptide. One can recognise an Inhibitor I9 domain in the interval 36–118 (KYIVVMNDGM…YIERDARVQI (83 aa)). Asparagine 58 is a glycosylation site (N-linked (GlcNAc...) asparagine). The 272-residue stretch at 129–400 (SWGLARVGSK…SKLINNGSGM (272 aa)) folds into the Peptidase S8 domain. Residues aspartate 161 and histidine 192 each act as charge relay system in the active site. Residues asparagine 222 and asparagine 252 are each glycosylated (N-linked (GlcNAc...) asparagine). Catalysis depends on serine 346, which acts as the Charge relay system. Asparagine 396 carries an N-linked (GlcNAc...) asparagine glycan.

Belongs to the peptidase S8 family.

The protein resides in the secreted. Functionally, secreted subtilisin-like serine protease with keratinolytic activity that contributes to pathogenicity. This is Subtilisin-like protease 7 (SUB7) from Trichophyton verrucosum (Cattle ringworm fungus).